We begin with the raw amino-acid sequence, 715 residues long: Polyribonucleotide nucleotidyltransferase (715 aa).

Positions 495 and 501 each coordinate Mg(2+). One can recognise a KH domain in the interval 562 to 621; the sequence is PRLLTLQIPPDMIGLVIGPGGKTVRGISEQYNVKVDISEEGLVTITAPNETNAKQARAAI. The S1 motif domain occupies 631 to 699; it reads GDVYLGRVTR…SKGRINLTRL (69 aa).

Belongs to the polyribonucleotide nucleotidyltransferase family. The cofactor is Mg(2+).

It is found in the cytoplasm. The enzyme catalyses RNA(n+1) + phosphate = RNA(n) + a ribonucleoside 5'-diphosphate. Functionally, involved in mRNA degradation. Catalyzes the phosphorolysis of single-stranded polyribonucleotides processively in the 3'- to 5'-direction. The protein is Polyribonucleotide nucleotidyltransferase of Thermosynechococcus vestitus (strain NIES-2133 / IAM M-273 / BP-1).